Consider the following 262-residue polypeptide: Phosphatidylglycerol--prolipoprotein diacylglyceryl transferase (262 aa).

The next 4 membrane-spanning stretches (helical) occupy residues 9 to 29 (LGPL…ILAV), 41 to 61 (IIPD…ILGA), 80 to 100 (IFAI…GALV), and 109 to 129 (LINT…AQSL). Arg131 contacts a 1,2-diacyl-sn-glycero-3-phospho-(1'-sn-glycerol). A run of 3 helical transmembrane segments spans residues 167 to 187 (QPTF…ILIF), 197 to 217 (GHIT…IEGM), and 227 to 247 (LRVS…IVIY).

It belongs to the Lgt family.

It is found in the cell membrane. It catalyses the reaction L-cysteinyl-[prolipoprotein] + a 1,2-diacyl-sn-glycero-3-phospho-(1'-sn-glycerol) = an S-1,2-diacyl-sn-glyceryl-L-cysteinyl-[prolipoprotein] + sn-glycerol 1-phosphate + H(+). The protein operates within protein modification; lipoprotein biosynthesis (diacylglyceryl transfer). Catalyzes the transfer of the diacylglyceryl group from phosphatidylglycerol to the sulfhydryl group of the N-terminal cysteine of a prolipoprotein, the first step in the formation of mature lipoproteins. This chain is Phosphatidylglycerol--prolipoprotein diacylglyceryl transferase, found in Streptococcus pneumoniae (strain JJA).